The following is a 156-amino-acid chain: Ribonuclease H (156 aa).

Positions 3–144 (ELKQIRIYTD…CDTLAREAAE (142 aa)) constitute an RNase H type-1 domain. Residues D12, E50, D72, and D136 each coordinate Mg(2+).

The protein belongs to the RNase H family. As to quaternary structure, monomer. It depends on Mg(2+) as a cofactor.

Its subcellular location is the cytoplasm. It catalyses the reaction Endonucleolytic cleavage to 5'-phosphomonoester.. Functionally, endonuclease that specifically degrades the RNA of RNA-DNA hybrids. The protein is Ribonuclease H of Shewanella amazonensis (strain ATCC BAA-1098 / SB2B).